The sequence spans 260 residues: BTB/POZ domain-containing protein KCTD21 (260 aa).

Residues 3–72 (DPITLNVGGK…LRTSHLDLPE (70 aa)) enclose the BTB domain. The stretch at 88 to 112 (QVQPLIEALQEKEVELSKAEKNAML) forms a coiled coil.

Homopentamer. Interacts with KCTD11; KCTD21 and KCTD11 may associate in pentameric assemblies. Interacts (via BTB domain) with CUL3; indicative for a participation in a BCR (BTB-CUL3-RBX1) E3 ubiquitin-protein ligase complex. As to expression, highly expressed in cerebellum and brain. Expressed in adult cerebellum (at protein level).

It functions in the pathway protein modification; protein ubiquitination. Functionally, probable substrate-specific adapter of a BCR (BTB-CUL3-RBX1) E3 ubiquitin-protein ligase complex mediating the ubiquitination and subsequent proteasomal degradation of target proteins. Promotes the ubiquitination of HDAC1. Can function as antagonist of the Hedgehog pathway by affecting the nuclear transfer of transcription factor GLI1; the function probably occurs via HDAC1 down-regulation, keeping GLI1 acetylated and inactive. Inhibits cell growth and tumorigenicity of medulloblastoma (MDB). The polypeptide is BTB/POZ domain-containing protein KCTD21 (Kctd21) (Mus musculus (Mouse)).